Consider the following 54-residue polypeptide: UPF0391 membrane protein BMEI0373 (54 aa).

2 consecutive transmembrane segments (helical) span residues 5-25 and 29-48; these read VLVF…GIAG and GIAQ…SLIA.

It belongs to the UPF0391 family.

Its subcellular location is the cell membrane. The protein is UPF0391 membrane protein BMEI0373 of Brucella melitensis biotype 1 (strain ATCC 23456 / CCUG 17765 / NCTC 10094 / 16M).